A 599-amino-acid polypeptide reads, in one-letter code: METENKYDNAVVKVDCDKKFSLNKLRICFCIDTSNSTKSLFVQTKEWGMTYLDVEKLFVMKMAEKLSYPESVTYIGWNKEACQVDCIKNLVQQRGTNPSCLFENDTSYHIVSNSDIVFLITDGIISNEDVNMFHQHMKSRGIQLKAIIGVIVGRRTNTNETYFQIKPADINVSVIAPATIANSCILFYNMKTVYVVWASGDFENILQPNSITKETLWSDVTTTSFKDLSEISLTFPNDKIHNSLIKNEYIHLGKGNYFNPVKLLVSKPTFHELIEYPFSQICQYFKITQSYDKLYLWFKNLCKEKLEILCQQSLCSIKNMIVKSSDNTFQFCNPYYKPLFIIERNKLFVYKYILNNAINFNLKSLLFNSEERSIMEFIRGIYGTMQEDMISSNVDSDYLAMNISRDRYKSFTKKTSTEYDYFKNNKSISKNEILFDNNNFKDVILWINLFNNNLHESVKPNENCSLCGDQGIGCVVIKKFLNLSNDEIIDNPVDHIYPKILCEKCAVCFCNYQIDTAKYYAAIPIVKPREEINHLIMNMIMCLMNGFFIKYFASMNDKVLSLFSTIIESLVGRNISTFDMINDTNCDDVNDHDGIHMQE.

This is an uncharacterized protein from Acanthamoeba polyphaga (Amoeba).